A 1531-amino-acid polypeptide reads, in one-letter code: DNA topoisomerase 2-alpha (1531 aa).

Met-1 is modified (N-acetylmethionine). Ser-4 carries the post-translational modification Phosphoserine. Residue Lys-17 forms a Glycyl lysine isopeptide (Lys-Gly) (interchain with G-Cter in SUMO2) linkage. ATP is bound by residues Asn-91, Asn-120, and 148-150; that span reads SSN. Glycyl lysine isopeptide (Lys-Gly) (interchain with G-Cter in SUMO2) cross-links involve residues Lys-156 and Lys-157. 161 to 168 contacts ATP; it reads GRNGYGAK. Residue Lys-261 forms a Glycyl lysine isopeptide (Lys-Gly) (interchain with G-Cter in SUMO2) linkage. A Phosphothreonine modification is found at Thr-282. An interaction with DNA region spans residues 342–344; sequence KKK. Lys-352 participates in a covalent cross-link: Glycyl lysine isopeptide (Lys-Gly) (interchain with G-Cter in SUMO2). 376-378 contributes to the ATP binding site; the sequence is QTK. Residues Lys-386, Lys-397, Lys-416, Lys-418, Lys-425, and Lys-440 each participate in a glycyl lysine isopeptide (Lys-Gly) (interchain with G-Cter in SUMO2) cross-link. The region spanning 455-572 is the Toprim domain; sequence CTLILTEGDS…SLLRHRFLEE (118 aa). Residue Glu-461 participates in Mg(2+) binding. Glycyl lysine isopeptide (Lys-Gly) (interchain with G-Cter in SUMO2) cross-links involve residues Lys-466, Lys-480, and Lys-529. Mg(2+) is bound by residues Asp-541 and Asp-543. Residues Lys-584, Lys-599, Lys-614, Lys-622, Lys-625, Lys-632, Lys-639, Lys-655, Lys-662, and Lys-676 each participate in a glycyl lysine isopeptide (Lys-Gly) (interchain with G-Cter in SUMO2) cross-link. The Topo IIA-type catalytic domain occupies 715 to 1171; sequence IPSMVDGLKP…SPSDLWKEDL (457 aa). Tyr-805 serves as the catalytic O-(5'-phospho-DNA)-tyrosine intermediate. Positions 990 to 999 are interaction with DNA; the sequence is KLQTSLTCNS. The short motif at 1018–1028 is the Nuclear export signal element; it reads ILRDFFELRLK. A Glycyl lysine isopeptide (Lys-Gly) (interchain with G-Cter in SUMO2) cross-link involves residue Lys-1075. Disordered regions lie at residues 1090-1123 and 1184-1531; these read WKEA…DSGP and KEKQ…DDLF. Acidic residues predominate over residues 1099–1108; sequence DEEENEESDN. Ser-1106 is subject to Phosphoserine; by CK1. Glycyl lysine isopeptide (Lys-Gly) (interchain with G-Cter in SUMO2) cross-links involve residues Lys-1114, Lys-1196, and Lys-1204. Thr-1205 is modified (phosphothreonine). The residue at position 1213 (Ser-1213) is a Phosphoserine. Lys-1228 participates in a covalent cross-link: Glycyl lysine isopeptide (Lys-Gly) (interchain with G-Cter in SUMO2). Lys-1240 participates in a covalent cross-link: Glycyl lysine isopeptide (Lys-Gly) (interchain with G-Cter in SUMO1); alternate. Residue Lys-1240 forms a Glycyl lysine isopeptide (Lys-Gly) (interchain with G-Cter in SUMO2); alternate linkage. At Thr-1244 the chain carries Phosphothreonine. At Ser-1247 the chain carries Phosphoserine. The segment covering 1256–1272 has biased composition (basic and acidic residues); the sequence is EGLKQRLEKKQKREPGT. Residues Lys-1259, Lys-1276, Lys-1283, and Lys-1286 each participate in a glycyl lysine isopeptide (Lys-Gly) (interchain with G-Cter in SUMO2) cross-link. A phosphoserine mark is found at Ser-1295, Ser-1297, Ser-1299, and Ser-1302. Thr-1327 is subject to Phosphothreonine. Residues 1330–1349 show a composition bias toward acidic residues; sequence LDSDEDFSDFDEKTDDEDFV. A phosphoserine mark is found at Ser-1332 and Ser-1337. At Thr-1343 the chain carries Phosphothreonine; by PLK3. Phosphoserine is present on residues Ser-1351 and Ser-1354. Residues Lys-1363, Lys-1367, and Lys-1373 each participate in a glycyl lysine isopeptide (Lys-Gly) (interchain with G-Cter in SUMO2) cross-link. Residues Ser-1374 and Ser-1377 each carry the phosphoserine modification. Residue Lys-1385 forms a Glycyl lysine isopeptide (Lys-Gly) (interchain with G-Cter in SUMO2) linkage. Residues Ser-1387, Ser-1391, Ser-1392, and Ser-1393 each carry the phosphoserine modification. The span at 1406–1431 shows a compositional bias: low complexity; that stretch reads TNPVPKKNVTVKKTAAKSQSSTSTTG. A Glycyl lysine isopeptide (Lys-Gly) (interchain with G-Cter in SUMO2); alternate cross-link involves residue Lys-1422. Lys-1422 is subject to N6-acetyllysine; alternate. The interval 1433–1439 is interaction with PLSCR1; the sequence is KKRAAPK. Residue Lys-1442 forms a Glycyl lysine isopeptide (Lys-Gly) (interchain with G-Cter in SUMO2); alternate linkage. At Lys-1442 the chain carries N6-acetyllysine; alternate. Phosphoserine is present on Ser-1449. Glycyl lysine isopeptide (Lys-Gly) (interchain with G-Cter in SUMO2) cross-links involve residues Lys-1454 and Lys-1459. Residue Ser-1469 is modified to Phosphoserine; by CK2. Thr-1470 carries the post-translational modification Phosphothreonine. Phosphoserine occurs at positions 1471, 1474, and 1476. Glycyl lysine isopeptide (Lys-Gly) (interchain with G-Cter in SUMO2) cross-links involve residues Lys-1484 and Lys-1492. The span at 1491–1502 shows a compositional bias: basic and acidic residues; the sequence is SKGESDDFHMDF. A phosphoserine mark is found at Ser-1495, Ser-1504, and Ser-1525.

Belongs to the type II topoisomerase family. Homodimer. Interacts with COPS5. Interacts with RECQL5; this stimulates DNA decatenation. Interacts with SETMAR; stimulates the topoisomerase activity. Interacts with DHX9; this interaction occurs in a E2 enzyme UBE2I- and RNA-dependent manner, negatively regulates DHX9-mediated double-stranded DNA and RNA duplex helicase activity and stimulates TOP2A-mediated supercoiled DNA relaxation activity. Interacts with HNRNPU (via C-terminus); this interaction protects the topoisomerase TOP2A from degradation and positively regulates the relaxation of supercoiled DNA in a RNA-dependent manner. Interacts with MCM3AP isoform GANP. Interacts with ERCC6. Interacts with PLSCR1. Interacts with GCNA; this interaction allows the resolution of topoisomerase II (TOP2A) DNA-protein cross-links. Interacts with POL1RA/RPA1 (via dock II) and UBTF in the context of Pol I complex; may assist Pol I transcription initiation by releasing supercoils occurring during DNA unwinding. Interacts with TPRN; TPRN interacts with a number of DNA damage response proteins, is recruited to sites of DNA damage and may play a role in DNA damage repair. The cofactor is Mg(2+). It depends on Mn(2+) as a cofactor. Ca(2+) is required as a cofactor. Post-translationally, phosphorylation has no effect on catalytic activity. However, phosphorylation at Ser-1106 by CSNK1D/CK1 promotes DNA cleavable complex formation. (Microbial infection) Deubiquitinated by Epstein-Barr virus BPLF1; leading to stabilized SUMOylated TOP2A trapped in cleavage complexes, which halts the DNA damage response to TOP2A-induced double-strand DNA breaks. In terms of processing, SUMOylated. In terms of tissue distribution, expressed in the tonsil, spleen, lymph node, thymus, skin, pancreas, testis, colon, kidney, liver, brain and lung. Also found in high-grade lymphomas, squamous cell lung tumors and seminomas.

The protein localises to the cytoplasm. It is found in the nucleus. It localises to the nucleoplasm. The protein resides in the nucleolus. The catalysed reaction is ATP-dependent breakage, passage and rejoining of double-stranded DNA.. Its activity is regulated as follows. Specifically inhibited by the intercalating agent amsacrine. Key decatenating enzyme that alters DNA topology by binding to two double-stranded DNA molecules, generating a double-stranded break in one of the strands, passing the intact strand through the broken strand, and religating the broken strand. May play a role in regulating the period length of BMAL1 transcriptional oscillation. The sequence is that of DNA topoisomerase 2-alpha (TOP2A) from Homo sapiens (Human).